We begin with the raw amino-acid sequence, 176 residues long: PPE family protein PPE57 (176 aa).

Belongs to the mycobacterial PPE family. Interacts with human TLR2.

Its subcellular location is the secreted. The protein resides in the cell wall. It is found in the cell surface. Plays a key role in regulating innate and adaptive immune responses through human Toll-like receptor 2 (TLR2). Interacts with TLR2, leading to the subsequent activation of the mitogen-activated protein kinase (MAPK) and nuclear factor kappa B (NF-kappa-B) signaling pathways. Induces macrophage activation by augmenting the expression of several cell surface molecules (CD40, CD80, CD86 and MHC class II) and pro-inflammatory cytokines (TNF-alpha, IL-6 and IL-12p40) within macrophages. Also participates in adaptive immunity by directing Th1-polarised immune responses. Stimulates specific humoral and cellular immune responses in tuberculosis (TB) patients. Induces a strong IgG(1) antibody response and an increased Th1/Th2 type immune response in mice. In Mycobacterium tuberculosis (strain ATCC 25618 / H37Rv), this protein is PPE family protein PPE57.